We begin with the raw amino-acid sequence, 200 residues long: ATP-dependent Clp protease proteolytic subunit 2 (200 aa).

The Nucleophile role is filled by Ser-99. His-123 is an active-site residue.

It belongs to the peptidase S14 family. In terms of assembly, fourteen ClpP subunits assemble into 2 heptameric rings which stack back to back to give a disk-like structure with a central cavity, resembling the structure of eukaryotic proteasomes.

Its subcellular location is the cytoplasm. The catalysed reaction is Hydrolysis of proteins to small peptides in the presence of ATP and magnesium. alpha-casein is the usual test substrate. In the absence of ATP, only oligopeptides shorter than five residues are hydrolyzed (such as succinyl-Leu-Tyr-|-NHMec, and Leu-Tyr-Leu-|-Tyr-Trp, in which cleavage of the -Tyr-|-Leu- and -Tyr-|-Trp bonds also occurs).. In terms of biological role, cleaves peptides in various proteins in a process that requires ATP hydrolysis. Has a chymotrypsin-like activity. Plays a major role in the degradation of misfolded proteins. The protein is ATP-dependent Clp protease proteolytic subunit 2 of Symbiobacterium thermophilum (strain DSM 24528 / JCM 14929 / IAM 14863 / T).